Reading from the N-terminus, the 265-residue chain is Small ribosomal subunit protein uS3 (265 aa).

Residues 39 to 107 form the KH type-2 domain; it reads VRDFLKKKLK…PVHVNIEEIR (69 aa). Residues 211–265 form a disordered region; it reads NDAPVVEEPQDDRRRRPGRPEGRRREGEGRPGGNRRGGAGAGRRAAPGADAKSGE. Positions 221–239 are enriched in basic and acidic residues; sequence DDRRRRPGRPEGRRREGEG. Over residues 240-251 the composition is skewed to gly residues; it reads RPGGNRRGGAGA.

The protein belongs to the universal ribosomal protein uS3 family. Part of the 30S ribosomal subunit. Forms a tight complex with proteins S10 and S14.

Binds the lower part of the 30S subunit head. Binds mRNA in the 70S ribosome, positioning it for translation. This chain is Small ribosomal subunit protein uS3, found in Cupriavidus necator (strain ATCC 17699 / DSM 428 / KCTC 22496 / NCIMB 10442 / H16 / Stanier 337) (Ralstonia eutropha).